The following is a 494-amino-acid chain: Probable malate:quinone oxidoreductase (494 aa).

Belongs to the MQO family. It depends on FAD as a cofactor.

It carries out the reaction (S)-malate + a quinone = a quinol + oxaloacetate. It participates in carbohydrate metabolism; tricarboxylic acid cycle; oxaloacetate from (S)-malate (quinone route): step 1/1. This is Probable malate:quinone oxidoreductase from Helicobacter hepaticus (strain ATCC 51449 / 3B1).